We begin with the raw amino-acid sequence, 344 residues long: NAD-dependent alcohol dehydrogenase (344 aa).

Cys-38, His-66, Asp-96, Cys-99, Cys-102, Cys-110, and Cys-152 together coordinate Zn(2+).

This sequence belongs to the zinc-containing alcohol dehydrogenase family. As to quaternary structure, homodimer and homotetramer. The cofactor is Zn(2+).

It catalyses the reaction a primary alcohol + NAD(+) = an aldehyde + NADH + H(+). The catalysed reaction is a secondary alcohol + NAD(+) = a ketone + NADH + H(+). The sequence is that of NAD-dependent alcohol dehydrogenase (adh) from Sulfolobus acidocaldarius (strain ATCC 33909 / DSM 639 / JCM 8929 / NBRC 15157 / NCIMB 11770).